A 410-amino-acid polypeptide reads, in one-letter code: Dephospho-CoA kinase (410 aa).

The DPCK domain maps to 3-201; the sequence is CIGITGGIGA…HRILPFAYNL (199 aa). 11–16 is an ATP binding site; that stretch reads GAGKSL. The interval 196–410 is UPF0157; sequence PFAYNLSQRQ…EWADSTGWRL (215 aa).

It in the N-terminal section; belongs to the CoaE family. In the C-terminal section; belongs to the UPF0157 (GrpB) family.

The protein localises to the cytoplasm. The catalysed reaction is 3'-dephospho-CoA + ATP = ADP + CoA + H(+). Its pathway is cofactor biosynthesis; coenzyme A biosynthesis; CoA from (R)-pantothenate: step 5/5. Its function is as follows. Catalyzes the phosphorylation of the 3'-hydroxyl group of dephosphocoenzyme A to form coenzyme A. The protein is Dephospho-CoA kinase of Mycobacterium leprae (strain TN).